Consider the following 329-residue polypeptide: tRNA N6-adenosine threonylcarbamoyltransferase (329 aa).

Residues histidine 108, histidine 112, and tyrosine 129 each coordinate Fe cation. Substrate contacts are provided by residues 129–133 (YVSGG), aspartate 161, glutamate 182, and serine 261. Aspartate 289 is a binding site for Fe cation.

The protein belongs to the KAE1 / TsaD family. It depends on Fe(2+) as a cofactor.

It is found in the cytoplasm. It carries out the reaction L-threonylcarbamoyladenylate + adenosine(37) in tRNA = N(6)-L-threonylcarbamoyladenosine(37) in tRNA + AMP + H(+). Required for the formation of a threonylcarbamoyl group on adenosine at position 37 (t(6)A37) in tRNAs that read codons beginning with adenine. Is probably involved in the transfer of the threonylcarbamoyl moiety of threonylcarbamoyl-AMP (TC-AMP) to the N6 group of A37. This chain is tRNA N6-adenosine threonylcarbamoyltransferase, found in Ignicoccus hospitalis (strain KIN4/I / DSM 18386 / JCM 14125).